We begin with the raw amino-acid sequence, 123 residues long: MSIETLVEEIGKLTLTEASELVKSLEEKFGVSAAPAVVAGVAAAAPAAAAAEEQTEFDVVLTAAGESKINVIKVVRAITGLGLKEAKDMVDGAPKTVKEAVSKDEAEKLMKELKDAGASVELK.

This sequence belongs to the bacterial ribosomal protein bL12 family. In terms of assembly, homodimer. Part of the ribosomal stalk of the 50S ribosomal subunit. Forms a multimeric L10(L12)X complex, where L10 forms an elongated spine to which 2 to 4 L12 dimers bind in a sequential fashion. Binds GTP-bound translation factors.

Its function is as follows. Forms part of the ribosomal stalk which helps the ribosome interact with GTP-bound translation factors. Is thus essential for accurate translation. The protein is Large ribosomal subunit protein bL12 of Chlorobium luteolum (strain DSM 273 / BCRC 81028 / 2530) (Pelodictyon luteolum).